A 200-amino-acid chain; its full sequence is Nucleoside triphosphate pyrophosphatase (200 aa).

The active-site Proton acceptor is Asp-79.

It belongs to the Maf family. It depends on a divalent metal cation as a cofactor.

It localises to the cytoplasm. The enzyme catalyses a ribonucleoside 5'-triphosphate + H2O = a ribonucleoside 5'-phosphate + diphosphate + H(+). It carries out the reaction a 2'-deoxyribonucleoside 5'-triphosphate + H2O = a 2'-deoxyribonucleoside 5'-phosphate + diphosphate + H(+). Its function is as follows. Nucleoside triphosphate pyrophosphatase. May have a dual role in cell division arrest and in preventing the incorporation of modified nucleotides into cellular nucleic acids. The sequence is that of Nucleoside triphosphate pyrophosphatase from Legionella pneumophila (strain Lens).